We begin with the raw amino-acid sequence, 455 residues long: Bifunctional protein GlmU (455 aa).

Positions 1 to 228 (MTQPLHVIIL…AQEAEGANDP (228 aa)) are pyrophosphorylase. Residues 10–13 (LAAG), Lys-24, Gln-76, 81–82 (GT), 103–105 (YGD), Gly-138, Glu-153, Asn-168, and Asn-226 contribute to the UDP-N-acetyl-alpha-D-glucosamine site. Asp-105 lines the Mg(2+) pocket. Asn-226 provides a ligand contact to Mg(2+). A linker region spans residues 229–249 (WQLSQLERAWQRRAVRALCAQ). Positions 250-455 (GARVRDPARL…DGWKRPLKKS (206 aa)) are N-acetyltransferase. 2 residues coordinate UDP-N-acetyl-alpha-D-glucosamine: Arg-332 and Lys-350. The active-site Proton acceptor is His-362. UDP-N-acetyl-alpha-D-glucosamine contacts are provided by Tyr-365 and Asn-376. Residues Ala-379, 385-386 (NY), Ser-404, Ala-422, and Arg-439 each bind acetyl-CoA.

The protein in the N-terminal section; belongs to the N-acetylglucosamine-1-phosphate uridyltransferase family. In the C-terminal section; belongs to the transferase hexapeptide repeat family. In terms of assembly, homotrimer. It depends on Mg(2+) as a cofactor.

Its subcellular location is the cytoplasm. The enzyme catalyses alpha-D-glucosamine 1-phosphate + acetyl-CoA = N-acetyl-alpha-D-glucosamine 1-phosphate + CoA + H(+). It catalyses the reaction N-acetyl-alpha-D-glucosamine 1-phosphate + UTP + H(+) = UDP-N-acetyl-alpha-D-glucosamine + diphosphate. The protein operates within nucleotide-sugar biosynthesis; UDP-N-acetyl-alpha-D-glucosamine biosynthesis; N-acetyl-alpha-D-glucosamine 1-phosphate from alpha-D-glucosamine 6-phosphate (route II): step 2/2. It participates in nucleotide-sugar biosynthesis; UDP-N-acetyl-alpha-D-glucosamine biosynthesis; UDP-N-acetyl-alpha-D-glucosamine from N-acetyl-alpha-D-glucosamine 1-phosphate: step 1/1. It functions in the pathway bacterial outer membrane biogenesis; LPS lipid A biosynthesis. In terms of biological role, catalyzes the last two sequential reactions in the de novo biosynthetic pathway for UDP-N-acetylglucosamine (UDP-GlcNAc). The C-terminal domain catalyzes the transfer of acetyl group from acetyl coenzyme A to glucosamine-1-phosphate (GlcN-1-P) to produce N-acetylglucosamine-1-phosphate (GlcNAc-1-P), which is converted into UDP-GlcNAc by the transfer of uridine 5-monophosphate (from uridine 5-triphosphate), a reaction catalyzed by the N-terminal domain. This chain is Bifunctional protein GlmU, found in Stenotrophomonas maltophilia (strain K279a).